Here is a 525-residue protein sequence, read N- to C-terminus: Keratin, type II cytoskeletal 71 (525 aa).

The segment at 1-131 (MSRQFTCKSG…DPEIQKVRAQ (131 aa)) is head. The tract at residues 132 to 167 (EREQIKALNNKFASFIDKVRFLEQQNQVLETKWELL) is coil 1A. Residues 132 to 445 (EREQIKALNN…KLLESEECRM (314 aa)) enclose the IF rod domain. A linker 1 region spans residues 168-186 (QQLDLNNCKNNLEPILEGY). A coil 1B region spans residues 187–278 (ISNLRKQLET…CLYEAEIAQI (92 aa)). The tract at residues 279 to 302 (QSHISDMSVILSMDNNRDLNLDSI) is linker 12. Positions 303–441 (IDEVRAQYED…ATYRKLLESE (139 aa)) are coil 2. The tract at residues 442–525 (ECRMSGEFPS…LSAPSKKASR (84 aa)) is tail. A disordered region spans residues 492-525 (VRGGESRSRSSTTDYKDALGKGSSLSAPSKKASR). A compositionally biased stretch (basic and acidic residues) spans 495–510 (GESRSRSSTTDYKDAL).

It belongs to the intermediate filament family. As to quaternary structure, heterodimer of a type I and a type II keratin. Associates with KRT16 and/or KRT17.

Its subcellular location is the cytoplasm. It is found in the cytoskeleton. In terms of biological role, plays a central role in hair formation. Essential component of keratin intermediate filaments in the inner root sheath (IRS) of the hair follicle. This Bos taurus (Bovine) protein is Keratin, type II cytoskeletal 71 (KRT71).